The sequence spans 250 residues: MNETEKSTHFGYQTVPTDQKTDKVKHVFESVAAKYDLMNDLMSLGIHRCWKDFAITQCRLRTGQRILDLAGGTGDLAKRISPLVGDEGEVVIADINAAMLNVGRRRLLDQGIFRNIQFIQADAEKLPFPNNFFDRIVIGFGLRNVTNQLAALQSMHRVIKPGGFVVILEFSKPTLAPLKAVYDAYSFQLLPRLGKLVAKDEESYRYLVESIRMHPDQEALLSKMTDAGFEDCDYHNLSGGIVAVHRGYKF.

Residues Thr73, Asp94, and 122-123 (DA) contribute to the S-adenosyl-L-methionine site.

This sequence belongs to the class I-like SAM-binding methyltransferase superfamily. MenG/UbiE family.

It catalyses the reaction a 2-demethylmenaquinol + S-adenosyl-L-methionine = a menaquinol + S-adenosyl-L-homocysteine + H(+). The enzyme catalyses a 2-methoxy-6-(all-trans-polyprenyl)benzene-1,4-diol + S-adenosyl-L-methionine = a 5-methoxy-2-methyl-3-(all-trans-polyprenyl)benzene-1,4-diol + S-adenosyl-L-homocysteine + H(+). Its pathway is quinol/quinone metabolism; menaquinone biosynthesis; menaquinol from 1,4-dihydroxy-2-naphthoate: step 2/2. It participates in cofactor biosynthesis; ubiquinone biosynthesis. Functionally, methyltransferase required for the conversion of demethylmenaquinol (DMKH2) to menaquinol (MKH2) and the conversion of 2-polyprenyl-6-methoxy-1,4-benzoquinol (DDMQH2) to 2-polyprenyl-3-methyl-6-methoxy-1,4-benzoquinol (DMQH2). This is Ubiquinone/menaquinone biosynthesis C-methyltransferase UbiE from Coxiella burnetii (strain RSA 331 / Henzerling II).